The following is a 333-amino-acid chain: Holliday junction branch migration complex subunit RuvB (333 aa).

The tract at residues 1-182 (MDERLLSGES…FGVLSRLEYY (182 aa)) is large ATPase domain (RuvB-L). ATP-binding positions include Leu-21, Arg-22, Gly-63, Lys-66, Thr-67, Thr-68, 129–131 (EDF), Arg-172, Tyr-182, and Arg-219. Mg(2+) is bound at residue Thr-67. Residues 183 to 253 (TVDQLSAIVE…ITQMALELLQ (71 aa)) are small ATPAse domain (RuvB-S). Positions 256–333 (KLGLDHIDHK…EHFGMEMPKV (78 aa)) are head domain (RuvB-H). Residues Arg-311 and Arg-316 each contribute to the DNA site.

Belongs to the RuvB family. Homohexamer. Forms an RuvA(8)-RuvB(12)-Holliday junction (HJ) complex. HJ DNA is sandwiched between 2 RuvA tetramers; dsDNA enters through RuvA and exits via RuvB. An RuvB hexamer assembles on each DNA strand where it exits the tetramer. Each RuvB hexamer is contacted by two RuvA subunits (via domain III) on 2 adjacent RuvB subunits; this complex drives branch migration. In the full resolvosome a probable DNA-RuvA(4)-RuvB(12)-RuvC(2) complex forms which resolves the HJ.

It localises to the cytoplasm. It carries out the reaction ATP + H2O = ADP + phosphate + H(+). Functionally, the RuvA-RuvB-RuvC complex processes Holliday junction (HJ) DNA during genetic recombination and DNA repair, while the RuvA-RuvB complex plays an important role in the rescue of blocked DNA replication forks via replication fork reversal (RFR). RuvA specifically binds to HJ cruciform DNA, conferring on it an open structure. The RuvB hexamer acts as an ATP-dependent pump, pulling dsDNA into and through the RuvAB complex. RuvB forms 2 homohexamers on either side of HJ DNA bound by 1 or 2 RuvA tetramers; 4 subunits per hexamer contact DNA at a time. Coordinated motions by a converter formed by DNA-disengaged RuvB subunits stimulates ATP hydrolysis and nucleotide exchange. Immobilization of the converter enables RuvB to convert the ATP-contained energy into a lever motion, pulling 2 nucleotides of DNA out of the RuvA tetramer per ATP hydrolyzed, thus driving DNA branch migration. The RuvB motors rotate together with the DNA substrate, which together with the progressing nucleotide cycle form the mechanistic basis for DNA recombination by continuous HJ branch migration. Branch migration allows RuvC to scan DNA until it finds its consensus sequence, where it cleaves and resolves cruciform DNA. This Bacillus cereus (strain 03BB102) protein is Holliday junction branch migration complex subunit RuvB.